The sequence spans 98 residues: NADH-ubiquinone oxidoreductase chain 4L (98 aa).

Transmembrane regions (helical) follow at residues 2-22, 29-49, and 61-81; these read PSIS…MLIF, SLLC…LTIL, and ILLL…LVTV.

Belongs to the complex I subunit 4L family. In terms of assembly, core subunit of respiratory chain NADH dehydrogenase (Complex I) which is composed of 45 different subunits.

It localises to the mitochondrion inner membrane. It carries out the reaction a ubiquinone + NADH + 5 H(+)(in) = a ubiquinol + NAD(+) + 4 H(+)(out). In terms of biological role, core subunit of the mitochondrial membrane respiratory chain NADH dehydrogenase (Complex I) which catalyzes electron transfer from NADH through the respiratory chain, using ubiquinone as an electron acceptor. Part of the enzyme membrane arm which is embedded in the lipid bilayer and involved in proton translocation. The sequence is that of NADH-ubiquinone oxidoreductase chain 4L (MT-ND4L) from Lemur catta (Ring-tailed lemur).